The sequence spans 140 residues: 3-hydroxyacyl-[acyl-carrier-protein] dehydratase FabZ (140 aa).

Residue H47 is part of the active site.

The protein belongs to the thioester dehydratase family. FabZ subfamily.

The protein resides in the cytoplasm. The catalysed reaction is a (3R)-hydroxyacyl-[ACP] = a (2E)-enoyl-[ACP] + H2O. Functionally, involved in unsaturated fatty acids biosynthesis. Catalyzes the dehydration of short chain beta-hydroxyacyl-ACPs and long chain saturated and unsaturated beta-hydroxyacyl-ACPs. This Streptococcus pneumoniae (strain CGSP14) protein is 3-hydroxyacyl-[acyl-carrier-protein] dehydratase FabZ.